Consider the following 1102-residue polypeptide: Probable leucine-rich repeat receptor-like protein kinase At5g63930 (1102 aa).

Positions 1 to 26 (MVKEMMKLAVFFISLLLILLISETTG) are cleaved as a signal peptide. Residues 27-737 (LNLEGQYLLE…GKPGGMRSSK (711 aa)) are Extracellular-facing. 4 N-linked (GlcNAc...) asparagine glycosylation sites follow: asparagine 54, asparagine 68, asparagine 79, and asparagine 119. LRR repeat units follow at residues 72-96 (DPEV…IGGL), 97-120 (VHLK…IGNC), 122-144 (SLEI…IGKL), 145-170 (VSLE…NLLS), 172-192 (SQLV…IGNL), 193-216 (KRLT…IGGC), 217-241 (ESLV…GMLK), 243-264 (LSQV…ISNC), 265-288 (TSLE…LGDL), 289-312 (QSLE…IGNL), 314-336 (YAIE…LGNI), 337-360 (EGLE…LSTL), 361-383 (KNLS…GFQY), 385-408 (RGLF…LGWY), 409-432 (SDLW…LCLH), 433-456 (SNMI…ITTC), 458-480 (TLVQ…LCKQ), 481-504 (VNVT…VGNC), 505-528 (SALQ…IGML), 529-552 (SQLG…IFNC), 554-576 (MLQR…VGSL), 577-602 (YQLE…NLSR), 604-624 (TELQ…LGSL), 625-649 (TGLQ…LSNL), 651-672 (MLEF…SFAN), and 674-700 (SSLL…SMSS). An N-linked (GlcNAc...) asparagine glycan is attached at asparagine 180. Asparagine 263 carries an N-linked (GlcNAc...) asparagine glycan. Asparagine 302 and asparagine 311 each carry an N-linked (GlcNAc...) asparagine glycan. The N-linked (GlcNAc...) asparagine glycan is linked to asparagine 362. The N-linked (GlcNAc...) asparagine glycan is linked to asparagine 444. Residues asparagine 482 and asparagine 503 are each glycosylated (N-linked (GlcNAc...) asparagine). Asparagine 535, asparagine 564, asparagine 588, asparagine 599, asparagine 614, asparagine 632, asparagine 661, asparagine 672, asparagine 680, and asparagine 695 each carry an N-linked (GlcNAc...) asparagine glycan. The helical transmembrane segment at 738 to 758 (IIAITAAVIGGVSLMLIALIV) threads the bilayer. Over 759-1102 (YLMRRPVRTV…TEELTQTTTP (344 aa)) the chain is Cytoplasmic. 2 positions are modified to phosphothreonine: threonine 793 and threonine 801. The 288-residue stretch at 804–1091 (FDESFVVGRG…ERSEGEQEHL (288 aa)) folds into the Protein kinase domain. Residues 810–818 (VGRGACGTV) and lysine 832 contribute to the ATP site. Phosphotyrosine occurs at positions 882 and 919. Aspartate 932 functions as the Proton acceptor in the catalytic mechanism. Position 966 is a phosphoserine (serine 966). Phosphotyrosine occurs at positions 974 and 981. Threonine 982 bears the Phosphothreonine mark.

This sequence belongs to the protein kinase superfamily. Ser/Thr protein kinase family.

The protein resides in the cell membrane. The catalysed reaction is L-seryl-[protein] + ATP = O-phospho-L-seryl-[protein] + ADP + H(+). It catalyses the reaction L-threonyl-[protein] + ATP = O-phospho-L-threonyl-[protein] + ADP + H(+). This is Probable leucine-rich repeat receptor-like protein kinase At5g63930 from Arabidopsis thaliana (Mouse-ear cress).